The primary structure comprises 565 residues: Dihydroxy-acid dehydratase (565 aa).

D80 contacts Mg(2+). C121 is a [2Fe-2S] cluster binding site. Positions 122 and 123 each coordinate Mg(2+). The residue at position 123 (K123) is an N6-carboxylysine. C194 lines the [2Fe-2S] cluster pocket. E447 contacts Mg(2+). S473 serves as the catalytic Proton acceptor.

It belongs to the IlvD/Edd family. In terms of assembly, homodimer. Requires [2Fe-2S] cluster as cofactor. It depends on Mg(2+) as a cofactor.

It catalyses the reaction (2R)-2,3-dihydroxy-3-methylbutanoate = 3-methyl-2-oxobutanoate + H2O. The enzyme catalyses (2R,3R)-2,3-dihydroxy-3-methylpentanoate = (S)-3-methyl-2-oxopentanoate + H2O. It participates in amino-acid biosynthesis; L-isoleucine biosynthesis; L-isoleucine from 2-oxobutanoate: step 3/4. It functions in the pathway amino-acid biosynthesis; L-valine biosynthesis; L-valine from pyruvate: step 3/4. Its function is as follows. Functions in the biosynthesis of branched-chain amino acids. Catalyzes the dehydration of (2R,3R)-2,3-dihydroxy-3-methylpentanoate (2,3-dihydroxy-3-methylvalerate) into 2-oxo-3-methylpentanoate (2-oxo-3-methylvalerate) and of (2R)-2,3-dihydroxy-3-methylbutanoate (2,3-dihydroxyisovalerate) into 2-oxo-3-methylbutanoate (2-oxoisovalerate), the penultimate precursor to L-isoleucine and L-valine, respectively. The sequence is that of Dihydroxy-acid dehydratase from Chlorobium phaeovibrioides (strain DSM 265 / 1930) (Prosthecochloris vibrioformis (strain DSM 265)).